Here is a 473-residue protein sequence, read N- to C-terminus: Histone-lysine N-methyltransferase ATXR2 (473 aa).

The SET domain occupies lysine 33–isoleucine 441. The MYND-type; degenerate zinc finger occupies glutamate 134–cysteine 203. Residues cysteine 176, cysteine 180, histidine 199, and cysteine 203 each contribute to the Zn(2+) site. Tyrosine 440 contacts S-adenosyl-L-methionine.

Belongs to the class V-like SAM-binding methyltransferase superfamily. Histone-lysine methyltransferase family. TRX/MLL subfamily. Interacts with JMJ30. Binds to ARF7 and ARF19 in the nucleus.

It is found in the nucleus. The catalysed reaction is L-lysyl-[histone] + S-adenosyl-L-methionine = N(6)-methyl-L-lysyl-[histone] + S-adenosyl-L-homocysteine + H(+). Functionally, histone methyltransferase that methylates 'Lys-36' (H3K36me) of histone H3 to produce H3K36me3. Promotes early stages of cellular dedifferentiation through H3K36me3-dependent, and to a lesser degree H3K4me3-dependent, activation of Lateral organ Boundaries-Domain (LBD) (e.g. LBD16 and LBD29) genes. Positive regulator of root organogenesis including lateral root formation as well as adventitious root formation from wounded leaf tissues. Recruited by JMJ30/ARF (e.g. ARF7 and ARF19) complexes to promote the deposition of H3K36me3 and, to a lower extent, H3K4me3 at LBD genes promoters, thus ensuring their stable activation during callus formation on callus-inducing medium (CIM). This chain is Histone-lysine N-methyltransferase ATXR2, found in Arabidopsis thaliana (Mouse-ear cress).